We begin with the raw amino-acid sequence, 21 residues long: QHSTDYDEVEDDRAKLHLDAR.

A Pyrrolidone carboxylic acid modification is found at glutamine 1. Acidic residues predominate over residues 1-11 (QHSTDYDEVED). The tract at residues 1–21 (QHSTDYDEVEDDRAKLHLDAR) is disordered. The O-linked (GalNAc...) threonine glycan is linked to threonine 4. Position 6 is a sulfotyrosine (tyrosine 6). A compositionally biased stretch (basic and acidic residues) spans 12–21 (DRAKLHLDAR).

Heterohexamer; disulfide linked. Contains 2 sets of 3 non-identical chains (alpha, beta and gamma). The 2 heterotrimers are in head to head conformation with the N-termini in a small central domain. In terms of processing, conversion of fibrinogen to fibrin is triggered by thrombin, which cleaves fibrinopeptides A and B from alpha and beta chains, and thus exposes the N-terminal polymerization sites responsible for the formation of the soft clot.

The protein resides in the secreted. Its function is as follows. Cleaved by the protease thrombin to yield monomers which, together with fibrinogen alpha (FGA) and fibrinogen gamma (FGG), polymerize to form an insoluble fibrin matrix. Fibrin has a major function in hemostasis as one of the primary components of blood clots. In addition, functions during the early stages of wound repair to stabilize the lesion and guide cell migration during re-epithelialization. Was originally thought to be essential for platelet aggregation, based on in vitro studies using anticoagulated blood. However subsequent studies have shown that it is not absolutely required for thrombus formation in vivo. Enhances expression of SELP in activated platelets. Maternal fibrinogen is essential for successful pregnancy. Fibrin deposition is also associated with infection, where it protects against IFNG-mediated hemorrhage. May also facilitate the antibacterial immune response via both innate and T-cell mediated pathways. This Muntiacus muntjak (Barking deer) protein is Fibrinogen beta chain (FGB).